We begin with the raw amino-acid sequence, 192 residues long: dTTP/UTP pyrophosphatase (192 aa).

Residue Asp72 is the Proton acceptor of the active site.

It belongs to the Maf family. YhdE subfamily. It depends on a divalent metal cation as a cofactor.

It is found in the cytoplasm. The catalysed reaction is dTTP + H2O = dTMP + diphosphate + H(+). The enzyme catalyses UTP + H2O = UMP + diphosphate + H(+). Functionally, nucleoside triphosphate pyrophosphatase that hydrolyzes dTTP and UTP. May have a dual role in cell division arrest and in preventing the incorporation of modified nucleotides into cellular nucleic acids. The sequence is that of dTTP/UTP pyrophosphatase from Geobacter metallireducens (strain ATCC 53774 / DSM 7210 / GS-15).